The sequence spans 498 residues: Glycerol kinase (498 aa).

Threonine 14 provides a ligand contact to ADP. Positions 14, 15, and 16 each coordinate ATP. Threonine 14 is a binding site for sn-glycerol 3-phosphate. ADP is bound at residue arginine 18. Residues arginine 84, glutamate 85, and tyrosine 136 each contribute to the sn-glycerol 3-phosphate site. The glycerol site is built by arginine 84, glutamate 85, and tyrosine 136. Histidine 232 bears the Phosphohistidine; by HPr mark. Aspartate 246 serves as a coordination point for sn-glycerol 3-phosphate. The glycerol site is built by aspartate 246 and glutamine 247. Residues threonine 268 and glycine 311 each coordinate ADP. Positions 268, 311, 315, and 412 each coordinate ATP. ADP is bound by residues glycine 412 and asparagine 416.

Belongs to the FGGY kinase family. Homotetramer and homodimer (in equilibrium). Post-translationally, the phosphoenolpyruvate-dependent sugar phosphotransferase system (PTS), including enzyme I, and histidine-containing protein (HPr) are required for the phosphorylation, which leads to the activation of the enzyme.

The enzyme catalyses glycerol + ATP = sn-glycerol 3-phosphate + ADP + H(+). It functions in the pathway polyol metabolism; glycerol degradation via glycerol kinase pathway; sn-glycerol 3-phosphate from glycerol: step 1/1. With respect to regulation, activated by phosphorylation and inhibited by fructose 1,6-bisphosphate (FBP). In terms of biological role, key enzyme in the regulation of glycerol uptake and metabolism. Catalyzes the phosphorylation of glycerol to yield sn-glycerol 3-phosphate. The chain is Glycerol kinase from Lactococcus lactis subsp. lactis (strain IL1403) (Streptococcus lactis).